Consider the following 680-residue polypeptide: Harmonin-binding protein USHBP1 (680 aa).

Basic residues predominate over residues Met1–His15. 2 disordered regions span residues Met1–Pro51 and Lys134–Gln161. Residues Asn179–Ser218 adopt a coiled-coil conformation. 2 disordered regions span residues Pro220–Asp247 and Thr384–Glu405. 2 coiled-coil regions span residues Thr363–Glu386 and Gln467–Gln506. The interval Phe524 to Gln549 is disordered. A coiled-coil region spans residues Gln573 to Ala662.

The protein belongs to the MCC family. As to quaternary structure, interacts via its C-terminus with the first PDZ domain of USH1C.

The chain is Harmonin-binding protein USHBP1 from Mus musculus (Mouse).